The sequence spans 364 residues: UDP-N-acetylglucosamine--N-acetylmuramyl-(pentapeptide) pyrophosphoryl-undecaprenol N-acetylglucosamine transferase (364 aa).

Residues T10 to G12, N123, S198, I251, and Q296 contribute to the UDP-N-acetyl-alpha-D-glucosamine site.

This sequence belongs to the glycosyltransferase 28 family. MurG subfamily.

Its subcellular location is the cell membrane. The enzyme catalyses di-trans,octa-cis-undecaprenyl diphospho-N-acetyl-alpha-D-muramoyl-L-alanyl-D-glutamyl-meso-2,6-diaminopimeloyl-D-alanyl-D-alanine + UDP-N-acetyl-alpha-D-glucosamine = di-trans,octa-cis-undecaprenyl diphospho-[N-acetyl-alpha-D-glucosaminyl-(1-&gt;4)]-N-acetyl-alpha-D-muramoyl-L-alanyl-D-glutamyl-meso-2,6-diaminopimeloyl-D-alanyl-D-alanine + UDP + H(+). It functions in the pathway cell wall biogenesis; peptidoglycan biosynthesis. In terms of biological role, cell wall formation. Catalyzes the transfer of a GlcNAc subunit on undecaprenyl-pyrophosphoryl-MurNAc-pentapeptide (lipid intermediate I) to form undecaprenyl-pyrophosphoryl-MurNAc-(pentapeptide)GlcNAc (lipid intermediate II). The polypeptide is UDP-N-acetylglucosamine--N-acetylmuramyl-(pentapeptide) pyrophosphoryl-undecaprenol N-acetylglucosamine transferase (Exiguobacterium sibiricum (strain DSM 17290 / CCUG 55495 / CIP 109462 / JCM 13490 / 255-15)).